Here is a 416-residue protein sequence, read N- to C-terminus: Gamma-glutamyl phosphate reductase (416 aa).

The protein belongs to the gamma-glutamyl phosphate reductase family.

The protein localises to the cytoplasm. It carries out the reaction L-glutamate 5-semialdehyde + phosphate + NADP(+) = L-glutamyl 5-phosphate + NADPH + H(+). It functions in the pathway amino-acid biosynthesis; L-proline biosynthesis; L-glutamate 5-semialdehyde from L-glutamate: step 2/2. Catalyzes the NADPH-dependent reduction of L-glutamate 5-phosphate into L-glutamate 5-semialdehyde and phosphate. The product spontaneously undergoes cyclization to form 1-pyrroline-5-carboxylate. This Salmonella paratyphi A (strain AKU_12601) protein is Gamma-glutamyl phosphate reductase.